The primary structure comprises 86 residues: Large ribosomal subunit protein bL31 (86 aa).

A disordered region spans residues 65-86; it reads YRMASSDSSEQKDKSSEEKKES. Positions 73 to 86 are enriched in basic and acidic residues; the sequence is SEQKDKSSEEKKES.

The protein belongs to the bacterial ribosomal protein bL31 family. Type A subfamily. In terms of assembly, part of the 50S ribosomal subunit.

Functionally, binds the 23S rRNA. This Prochlorococcus marinus (strain NATL1A) protein is Large ribosomal subunit protein bL31.